Reading from the N-terminus, the 529-residue chain is Beta-glucosidase 11 (529 aa).

The signal sequence occupies residues 1-25 (MAVAGAMVMSGALLLLHLLAFTCVA). A beta-D-glucoside is bound by residues Gln-54, His-157, and 202-203 (NE). Residue Glu-203 is the Proton donor of the active site. Cys-222 and Cys-230 are joined by a disulfide. Residue Tyr-346 coordinates a beta-D-glucoside. An N-linked (GlcNAc...) asparagine glycan is attached at Asn-361. Residue Glu-417 coordinates a beta-D-glucoside. The active-site Nucleophile is Glu-417. Residue Asn-425 is glycosylated (N-linked (GlcNAc...) asparagine). A beta-D-glucoside is bound by residues Trp-466, 473–474 (EW), and Phe-482.

The protein belongs to the glycosyl hydrolase 1 family.

It carries out the reaction Hydrolysis of terminal, non-reducing beta-D-glucosyl residues with release of beta-D-glucose.. The polypeptide is Beta-glucosidase 11 (BGLU11) (Oryza sativa subsp. japonica (Rice)).